The primary structure comprises 390 residues: tRNA-specific 2-thiouridylase MnmA (390 aa).

Residues 29–36 and leucine 55 contribute to the ATP site; that span reads GLSGGVDS. The active-site Nucleophile is the cysteine 116. Cysteine 116 and cysteine 225 are oxidised to a cystine. Glycine 141 lines the ATP pocket. The interval 175 to 177 is interaction with tRNA; that stretch reads KDQ. Cysteine 225 serves as the catalytic Cysteine persulfide intermediate. The tract at residues 330–331 is interaction with tRNA; sequence RY.

It belongs to the MnmA/TRMU family.

The protein localises to the cytoplasm. The enzyme catalyses S-sulfanyl-L-cysteinyl-[protein] + uridine(34) in tRNA + AH2 + ATP = 2-thiouridine(34) in tRNA + L-cysteinyl-[protein] + A + AMP + diphosphate + H(+). Catalyzes the 2-thiolation of uridine at the wobble position (U34) of tRNA, leading to the formation of s(2)U34. The polypeptide is tRNA-specific 2-thiouridylase MnmA (Prochlorococcus marinus (strain MIT 9515)).